A 493-amino-acid chain; its full sequence is Cholesteryl ester transfer protein (493 aa).

Positions 1 to 17 are cleaved as a signal peptide; that stretch reads MLAATVLTLALLGNAHA. Asn-105 carries an N-linked (GlcNAc...) (complex) asparagine glycan. A disulfide bond links Cys-160 and Cys-201. Residues Asn-257, Asn-358, and Asn-413 are each glycosylated (N-linked (GlcNAc...) asparagine).

Belongs to the BPI/LBP/Plunc superfamily. BPI/LBP family. As to expression, expressed by the liver and secreted in plasma.

It is found in the secreted. It carries out the reaction cholesteryl (9Z-octadecenoate)(in) = cholesteryl (9Z-octadecenoate)(out). The catalysed reaction is 1,2,3-tri-(9Z-octadecenoyl)-glycerol(in) = 1,2,3-tri-(9Z-octadecenoyl)-glycerol(out). The enzyme catalyses cholesteryl (9Z,12Z)-octadecadienoate(in) = cholesteryl (9Z,12Z)-octadecadienoate(out). In terms of biological role, involved in the transfer of neutral lipids, including cholesteryl ester and triglyceride, among lipoprotein particles. Allows the net movement of cholesteryl ester from high density lipoproteins/HDL to triglyceride-rich very low density lipoproteins/VLDL, and the equimolar transport of triglyceride from VLDL to HDL. Regulates the reverse cholesterol transport, by which excess cholesterol is removed from peripheral tissues and returned to the liver for elimination. The protein is Cholesteryl ester transfer protein of Homo sapiens (Human).